A 389-amino-acid polypeptide reads, in one-letter code: Chalcone synthase 9 (389 aa).

Cys164 is a catalytic residue.

It belongs to the thiolase-like superfamily. Chalcone/stilbene synthases family.

The enzyme catalyses (E)-4-coumaroyl-CoA + 3 malonyl-CoA + 3 H(+) = 2',4,4',6'-tetrahydroxychalcone + 3 CO2 + 4 CoA. It functions in the pathway secondary metabolite biosynthesis; flavonoid biosynthesis. Its function is as follows. The primary product of this enzyme is 4,2',4',6'-tetrahydroxychalcone (also termed naringenin-chalcone or chalcone) which can under specific conditions spontaneously isomerize into naringenin. The sequence is that of Chalcone synthase 9 (CHS9) from Medicago sativa (Alfalfa).